The chain runs to 125 residues: Small ribosomal subunit protein eS8 (125 aa).

The protein belongs to the eukaryotic ribosomal protein eS8 family. In terms of assembly, part of the 30S ribosomal subunit.

In Methanocorpusculum labreanum (strain ATCC 43576 / DSM 4855 / Z), this protein is Small ribosomal subunit protein eS8.